We begin with the raw amino-acid sequence, 55 residues long: Large ribosomal subunit protein bL33 (55 aa).

Belongs to the bacterial ribosomal protein bL33 family.

This Blochmanniella pennsylvanica (strain BPEN) protein is Large ribosomal subunit protein bL33.